The primary structure comprises 97 residues: Aspartyl/glutamyl-tRNA(Asn/Gln) amidotransferase subunit C (97 aa).

Belongs to the GatC family. As to quaternary structure, heterotrimer of A, B and C subunits.

The catalysed reaction is L-glutamyl-tRNA(Gln) + L-glutamine + ATP + H2O = L-glutaminyl-tRNA(Gln) + L-glutamate + ADP + phosphate + H(+). It carries out the reaction L-aspartyl-tRNA(Asn) + L-glutamine + ATP + H2O = L-asparaginyl-tRNA(Asn) + L-glutamate + ADP + phosphate + 2 H(+). Allows the formation of correctly charged Asn-tRNA(Asn) or Gln-tRNA(Gln) through the transamidation of misacylated Asp-tRNA(Asn) or Glu-tRNA(Gln) in organisms which lack either or both of asparaginyl-tRNA or glutaminyl-tRNA synthetases. The reaction takes place in the presence of glutamine and ATP through an activated phospho-Asp-tRNA(Asn) or phospho-Glu-tRNA(Gln). This is Aspartyl/glutamyl-tRNA(Asn/Gln) amidotransferase subunit C from Nostoc punctiforme (strain ATCC 29133 / PCC 73102).